The following is a 252-amino-acid chain: Imidazole glycerol phosphate synthase subunit HisF (252 aa).

Catalysis depends on residues aspartate 11 and aspartate 130.

The protein belongs to the HisA/HisF family. Heterodimer of HisH and HisF.

The protein localises to the cytoplasm. The catalysed reaction is 5-[(5-phospho-1-deoxy-D-ribulos-1-ylimino)methylamino]-1-(5-phospho-beta-D-ribosyl)imidazole-4-carboxamide + L-glutamine = D-erythro-1-(imidazol-4-yl)glycerol 3-phosphate + 5-amino-1-(5-phospho-beta-D-ribosyl)imidazole-4-carboxamide + L-glutamate + H(+). Its pathway is amino-acid biosynthesis; L-histidine biosynthesis; L-histidine from 5-phospho-alpha-D-ribose 1-diphosphate: step 5/9. Functionally, IGPS catalyzes the conversion of PRFAR and glutamine to IGP, AICAR and glutamate. The HisF subunit catalyzes the cyclization activity that produces IGP and AICAR from PRFAR using the ammonia provided by the HisH subunit. The polypeptide is Imidazole glycerol phosphate synthase subunit HisF (Streptococcus sanguinis (strain SK36)).